The primary structure comprises 315 residues: MSNKQETKILGMPPFVVDFLMGGVSAAVSKTAAAPIERIKLLVQNQDEMIKAGRLDRRYNGIIDCFRRTTADEGLMALWRGNTANVIRYFPTQALNFAFRDKFKAMFGYKKDKDGYAKWMAGNLASGGAAGATSLLFVYSLDYARTRLANDAKSAKGGGARQFNGLIDVYRKTLASDGIAGLYRGFGPSVAGIVVYRGLYFGMYDSIKPVVLVGPLANNFLASFLLGWCVTTGAGIASYPLDTVRRRMMMTSGEAVKYKSSIDAFRQIIAKEGVKSLFKGAGANILRGVAGAGVLSIYDQLQILLFGKAFKGGSG.

Over 1–13 the chain is Mitochondrial intermembrane; sequence MSNKQETKILGMP. Solcar repeat units follow at residues 13-106 and 118-210; these read PPFV…FKAM and KWMA…IKPV. The helical transmembrane segment at 14-37 threads the bilayer; sequence PFVVDFLMGGVSAAVSKTAAAPIE. Lysine 30 is a bongkrekate binding site. Topologically, residues 38-80 are mitochondrial matrix; sequence RIKLLVQNQDEMIKAGRLDRRYNGIIDCFRRTTADEGLMALWR. Residues isoleucine 62 and 81 to 83 contribute to the a cardiolipin site; that span reads GNT. The chain crosses the membrane as a helical span at residues 81–104; sequence GNTANVIRYFPTQALNFAFRDKFK. Arginine 88 contributes to the ADP binding site. Bongkrekate contacts are provided by residues 88 to 89 and asparagine 96; that span reads RY. At 105 to 115 the chain is on the mitochondrial intermembrane side; that stretch reads AMFGYKKDKDG. A helical transmembrane segment spans residues 116 to 145; sequence YAKWMAGNLASGGAAGATSLLFVYSLDYAR. The Mitochondrial matrix portion of the chain corresponds to 146–184; it reads TRLANDAKSAKGGGARQFNGLIDVYRKTLASDGIAGLYR. Residues leucine 166 and 184–185 contribute to the a cardiolipin site; that span reads RG. A helical transmembrane segment spans residues 185 to 213; that stretch reads GFGPSVAGIVVYRGLYFGMYDSIKPVVLV. Position 196–197 (196–197) interacts with bongkrekate; the sequence is YR. The Mitochondrial intermembrane portion of the chain corresponds to 214–216; that stretch reads GPL. The chain crosses the membrane as a helical span at residues 217–242; it reads ANNFLASFLLGWCVTTGAGIASYPLD. The Solcar repeat unit spans residues 218-304; sequence NNFLASFLLG…LSIYDQLQIL (87 aa). Topologically, residues 243–283 are mitochondrial matrix; that stretch reads TVRRRMMMTSGEAVKYKSSIDAFRQIIAKEGVKSLFKGAGA. Arginine 245 serves as a coordination point for ADP. The short motif at 245–250 is the Nucleotide carrier signature motif element; sequence RRRMMM. A cardiolipin contacts are provided by residues 260–261 and 280–282; these read SS and GAG. A helical membrane pass occupies residues 284–304; that stretch reads NILRGVAGAGVLSIYDQLQIL. At 305–315 the chain is on the mitochondrial intermembrane side; sequence LFGKAFKGGSG.

It belongs to the mitochondrial carrier (TC 2.A.29) family. As to quaternary structure, monomer.

It localises to the mitochondrion inner membrane. The catalysed reaction is ADP(in) + ATP(out) = ADP(out) + ATP(in). The matrix-open state (m-state) is inhibited by the membrane-permeable bongkrekic acid (BKA). The cytoplasmic-open state (c-state) is inhibited by the membrane-impermeable toxic inhibitor carboxyatractyloside (CATR). ADP:ATP antiporter that mediates import of ADP into the mitochondrial matrix for ATP synthesis, and export of ATP out to fuel the cell. Cycles between the cytoplasmic-open state (c-state) and the matrix-open state (m-state): operates by the alternating access mechanism with a single substrate-binding site intermittently exposed to either the cytosolic (c-state) or matrix (m-state) side of the inner mitochondrial membrane. The chain is ADP/ATP translocase from Thermothelomyces thermophilus (strain ATCC 42464 / BCRC 31852 / DSM 1799) (Sporotrichum thermophile).